The following is a 113-amino-acid chain: Iron-sulfur cluster insertion protein ErpA (113 aa).

Iron-sulfur cluster contacts are provided by C41, C105, and C107.

Belongs to the HesB/IscA family. As to quaternary structure, homodimer. Iron-sulfur cluster serves as cofactor.

Required for insertion of 4Fe-4S clusters for at least IspG. The polypeptide is Iron-sulfur cluster insertion protein ErpA (Vibrio vulnificus (strain CMCP6)).